Reading from the N-terminus, the 483-residue chain is UDP-N-acetylmuramoyl-L-alanyl-D-glutamate--2,6-diaminopimelate ligase (483 aa).

Ser29 contributes to the UDP-N-acetyl-alpha-D-muramoyl-L-alanyl-D-glutamate binding site. 112-118 contributes to the ATP binding site; it reads GTNGKTT. Residues 154-155, Ser181, and Arg189 contribute to the UDP-N-acetyl-alpha-D-muramoyl-L-alanyl-D-glutamate site; that span reads TT. Lys221 carries the N6-carboxylysine modification. Meso-2,6-diaminopimelate contacts are provided by residues Arg380, 404 to 407, Gly454, and Glu458; that span reads DNPR. The short motif at 404-407 is the Meso-diaminopimelate recognition motif element; it reads DNPR.

Belongs to the MurCDEF family. MurE subfamily. Requires Mg(2+) as cofactor. In terms of processing, carboxylation is probably crucial for Mg(2+) binding and, consequently, for the gamma-phosphate positioning of ATP.

It is found in the cytoplasm. It catalyses the reaction UDP-N-acetyl-alpha-D-muramoyl-L-alanyl-D-glutamate + meso-2,6-diaminopimelate + ATP = UDP-N-acetyl-alpha-D-muramoyl-L-alanyl-gamma-D-glutamyl-meso-2,6-diaminopimelate + ADP + phosphate + H(+). Its pathway is cell wall biogenesis; peptidoglycan biosynthesis. In terms of biological role, catalyzes the addition of meso-diaminopimelic acid to the nucleotide precursor UDP-N-acetylmuramoyl-L-alanyl-D-glutamate (UMAG) in the biosynthesis of bacterial cell-wall peptidoglycan. The polypeptide is UDP-N-acetylmuramoyl-L-alanyl-D-glutamate--2,6-diaminopimelate ligase (Clostridium botulinum (strain ATCC 19397 / Type A)).